The following is a 582-amino-acid chain: ATP-dependent lipid A-core flippase (582 aa).

5 helical membrane-spanning segments follow: residues 16-36 (LWPT…ALIL), 63-83 (VLVW…ITSY), 153-173 (IIGL…ILIV), 253-273 (PIIQ…ASFP), and 275-295 (VMDS…IALM). The region spanning 28-310 (IVAGVALILN…LTNVNAQFQR (283 aa)) is the ABC transmembrane type-1 domain. Positions 342–578 (VEFRNVTFTY…RGVYAQLHKM (237 aa)) constitute an ABC transporter domain. 376-383 (GRSGSGKS) contributes to the ATP binding site.

It belongs to the ABC transporter superfamily. Lipid exporter (TC 3.A.1.106) family. As to quaternary structure, homodimer.

The protein localises to the cell inner membrane. The catalysed reaction is ATP + H2O + lipid A-core oligosaccharideSide 1 = ADP + phosphate + lipid A-core oligosaccharideSide 2.. Its function is as follows. Involved in lipopolysaccharide (LPS) biosynthesis. Translocates lipid A-core from the inner to the outer leaflet of the inner membrane. Transmembrane domains (TMD) form a pore in the inner membrane and the ATP-binding domain (NBD) is responsible for energy generation. The polypeptide is ATP-dependent lipid A-core flippase (Escherichia coli O157:H7).